Reading from the N-terminus, the 1341-residue chain is WASH complex subunit 2A (1341 aa).

Residues 1-220 (MMNRTTPDQE…VGSDRGSIVD (220 aa)) form a sufficient for interaction with WASHC3, WASHC4 and WASHC5; required for interaction with WASHC1 region. Low complexity predominate over residues 202–214 (GELSSEEGSVGSD). Residues 202 to 405 (GELSSEEGSV…SSSKPGKKIP (204 aa)) are disordered. The span at 220–232 (DTEEEKEEEESDE) shows a compositional bias: acidic residues. Residues 233-244 (DFAHHSDNEQNR) show a composition bias toward basic and acidic residues. Composition is skewed to acidic residues over residues 250–259 (SDEEEDDDGC) and 266–276 (EKEEEDIEDIE). A compositionally biased stretch (basic and acidic residues) spans 293-307 (LAARIKGDAVGRVDE). Over residues 355 to 366 (GSGGGLFSGGKG) the composition is skewed to gly residues. Residues 356-600 (SGGGLFSGGK…QTLCLQAQRE (245 aa)) are sufficient for interaction with CCDC93. The tract at residues 356-742 (SGGGLFSGGK…KEAQLGVKSV (387 aa)) is required for interaction with CCDC22 and VPS35L. An interaction with VPS35 region spans residues 357-1341 (GGGLFSGGKG…DDPLNAFGGQ (985 aa)). Short sequence motifs (LFa) lie at residues 367–378 (LFDDEDEESDLF), 411–419 (VFLGDTDVF), 450–463 (LFDD…DDFF), and 482–491 (IFGDEEGDLF). Residues 422–554 (ASVPSMKEPQ…EDLFSSQSAS (133 aa)) are disordered. A compositionally biased stretch (acidic residues) spans 451-462 (FDDDDGDDDDDF). Basic and acidic residues predominate over residues 507–517 (DENKARAEKKV). A compositionally biased stretch (polar residues) spans 518-536 (TLSSSKNLKPSSETKTQKG). Short sequence motifs (LFa) lie at residues 537–548 (LFSDEEDSEDLF), 572–583 (LFDDEDEEDNLF), and 617–629 (LFSS…WNIP). Ser539 bears the Phosphoserine mark. Disordered regions lie at residues 621–664 (DEED…KTSL), 696–739 (DSGG…QLGV), and 751–838 (ESLK…KSTG). The span at 637-647 (SDSRSKGEPRD) shows a compositional bias: basic and acidic residues. 3 consecutive short sequence motifs (LFa) follow at residues 664 to 674 (LFEEDEEDDLF), 690 to 702 (LFED…GSLF), and 726 to 738 (LFSD…AQLG). Positions 751 to 768 (ESLKFGRTDVAESEKEGL) are enriched in basic and acidic residues. The LFa 11 signature appears at 803-817 (LFDEEEDKMEDQNII). Residues 823-834 (EVGKGRDPDAHP) show a composition bias toward basic and acidic residues. 3 short sequence motifs (LFa) span residues 839–847 (VFQDEELLF), 856–862 (DPDVDLF), and 878–888 (LFGDDEDDDLF). Disordered regions lie at residues 881 to 951 (DDED…KEPS) and 988 to 1205 (FPSS…LEDE). Basic and acidic residues-rich tracts occupy residues 898 to 911 (QEKK…HSVD) and 917 to 931 (KHPE…KGIW). Residues 937 to 1341 (QDSSGLAPFK…DDPLNAFGGQ (405 aa)) form an interaction with phospholipids region. Positions 1028-1046 (NKSRVKMRGKRRPQTRAAR) are enriched in basic residues. Positions 1029 to 1047 (KSRVKMRGKRRPQTRAARR) are required for interaction with F-actin-capping protein subunit alpha (CAPZA1 or CAPZA2 or CAPZA3). Phosphoserine is present on residues Ser1054 and Ser1087. Residues 1094-1110 (EALAAAAAPWEGGPVPG) show a composition bias toward low complexity. Position 1114 is a phosphoserine (Ser1114). 6 short sequence motifs (LFa) span residues 1129-1136 (LFDSGDIF), 1171-1185 (MFPA…DDLF), 1201-1209 (LLEDEDDLF), 1234-1240 (IFEDDIF), 1262-1270 (LFDDNIDIF), and 1290-1299 (IFDDDMDDIF). The segment covering 1135 to 1145 (IFSTGTGSQSV) has biased composition (polar residues). A disordered region spans residues 1302–1326 (GIQAKTTKPKSRSAQAAPEPRFEHK). The LFa 21 motif lies at 1330–1338 (IFDDPLNAF).

Belongs to the FAM21 family. In terms of assembly, component of the WASH core complex also described as WASH regulatory complex (SHRC) composed of WASH (WASHC1, WASH2P or WASH3P), WASHC2 (WASHC2A or WASHC2C), WASHC3, WASHC4 and WASHC5; in the complex interacts (via N-terminus) directly with WASHC1. The WASH core complex associates with the F-actin-capping protein dimer (formed by CAPZA1, CAPZA2 or CAPZA3 and CAPZB) in a transient or substoichiometric manner which was initially described as WASH complex. Interacts with VPS35; mediates the association with the retromer CSC complex. Interacts with FKBP15. Interacts with CCDC93, CCDC22, VPS35L; indicative for an association of the WASH core complex with the CCC and retriever complexes. Directly interacts with TBC1D23.

It localises to the early endosome membrane. Its subcellular location is the cell membrane. Its function is as follows. Acts at least in part as component of the WASH core complex whose assembly at the surface of endosomes inhibits WASH nucleation-promoting factor (NPF) activity in recruiting and activating the Arp2/3 complex to induce actin polymerization and is involved in the fission of tubules that serve as transport intermediates during endosome sorting. Mediates the recruitment of the WASH core complex to endosome membranes via binding to phospholipids and VPS35 of the retromer CSC. Mediates the recruitment of the F-actin-capping protein dimer to the WASH core complex probably promoting localized F-actin polymerization needed for vesicle scission. Via its C-terminus binds various phospholipids, most strongly phosphatidylinositol 4-phosphate (PtdIns-(4)P), phosphatidylinositol 5-phosphate (PtdIns-(5)P) and phosphatidylinositol 3,5-bisphosphate (PtdIns-(3,5)P2). Involved in the endosome-to-plasma membrane trafficking and recycling of SNX27-retromer-dependent cargo proteins, such as GLUT1. Required for the association of DNAJC13, ENTR1, ANKRD50 with retromer CSC subunit VPS35. Required for the endosomal recruitment of CCC complex subunits COMMD1 and CCDC93 as well as the retriever complex subunit VPS35L. The chain is WASH complex subunit 2A from Homo sapiens (Human).